Reading from the N-terminus, the 387-residue chain is Chaperone protein DnaJ (387 aa).

The region spanning 5–70 (DYYEVLGVAK…QKRAAYDRFG (66 aa)) is the J domain. The segment at 140–218 (GKTETIRLPT…CGGAGRVTRE (79 aa)) adopts a CR-type zinc-finger fold. 8 residues coordinate Zn(2+): Cys153, Cys156, Cys170, Cys173, Cys192, Cys195, Cys206, and Cys209. CXXCXGXG motif repeat units lie at residues 153 to 160 (CEVCAGSG), 170 to 177 (CPTCGGYG), 192 to 199 (CPNCQGRG), and 206 to 213 (CAACGGAG).

The protein belongs to the DnaJ family. Homodimer. Zn(2+) serves as cofactor.

It localises to the cytoplasm. Participates actively in the response to hyperosmotic and heat shock by preventing the aggregation of stress-denatured proteins and by disaggregating proteins, also in an autonomous, DnaK-independent fashion. Unfolded proteins bind initially to DnaJ; upon interaction with the DnaJ-bound protein, DnaK hydrolyzes its bound ATP, resulting in the formation of a stable complex. GrpE releases ADP from DnaK; ATP binding to DnaK triggers the release of the substrate protein, thus completing the reaction cycle. Several rounds of ATP-dependent interactions between DnaJ, DnaK and GrpE are required for fully efficient folding. Also involved, together with DnaK and GrpE, in the DNA replication of plasmids through activation of initiation proteins. This is Chaperone protein DnaJ from Methylobacterium sp. (strain 4-46).